The primary structure comprises 212 residues: Inactive ribonuclease-like protein 10 (212 aa).

Residues 1–24 (MKLTLVQIFFMMLLLLLGLGVGLG) form the signal peptide.

The protein belongs to the pancreatic ribonuclease family. The N-terminus is blocked. Glycosylated. In terms of tissue distribution, male-specific expression in proximal caput of the epididymis.

It is found in the secreted. Secreted proximal epididymal protein required for post-testicular sperm maturation and male fertility. May be involved in sperm adhesion to the egg zona pellucida. Does not have ribonuclease activity. This chain is Inactive ribonuclease-like protein 10 (RNASE10), found in Ovis aries (Sheep).